We begin with the raw amino-acid sequence, 148 residues long: 3-dehydroquinate dehydratase (148 aa).

The active-site Proton acceptor is Y26. Residues N75, H81, and D88 each contribute to the substrate site. H101 acts as the Proton donor in catalysis. Substrate is bound by residues 102–103 and R112; that span reads LS.

Belongs to the type-II 3-dehydroquinase family. In terms of assembly, homododecamer.

The catalysed reaction is 3-dehydroquinate = 3-dehydroshikimate + H2O. It functions in the pathway metabolic intermediate biosynthesis; chorismate biosynthesis; chorismate from D-erythrose 4-phosphate and phosphoenolpyruvate: step 3/7. Its function is as follows. Catalyzes a trans-dehydration via an enolate intermediate. The polypeptide is 3-dehydroquinate dehydratase (Shewanella frigidimarina (strain NCIMB 400)).